The sequence spans 292 residues: NAD kinase (292 aa).

Residue D73 is the Proton acceptor of the active site. NAD(+) contacts are provided by residues D73–G74, N147–E148, H158, R175, D177, T188–S193, and Q247.

The protein belongs to the NAD kinase family. A divalent metal cation serves as cofactor.

The protein localises to the cytoplasm. The catalysed reaction is NAD(+) + ATP = ADP + NADP(+) + H(+). Involved in the regulation of the intracellular balance of NAD and NADP, and is a key enzyme in the biosynthesis of NADP. Catalyzes specifically the phosphorylation on 2'-hydroxyl of the adenosine moiety of NAD to yield NADP. This chain is NAD kinase, found in Shigella boydii serotype 18 (strain CDC 3083-94 / BS512).